Consider the following 337-residue polypeptide: Phosphate acyltransferase (337 aa).

Belongs to the PlsX family. Homodimer. Probably interacts with PlsY.

Its subcellular location is the cytoplasm. It catalyses the reaction a fatty acyl-[ACP] + phosphate = an acyl phosphate + holo-[ACP]. Its pathway is lipid metabolism; phospholipid metabolism. Its function is as follows. Catalyzes the reversible formation of acyl-phosphate (acyl-PO(4)) from acyl-[acyl-carrier-protein] (acyl-ACP). This enzyme utilizes acyl-ACP as fatty acyl donor, but not acyl-CoA. The sequence is that of Phosphate acyltransferase from Halalkalibacterium halodurans (strain ATCC BAA-125 / DSM 18197 / FERM 7344 / JCM 9153 / C-125) (Bacillus halodurans).